We begin with the raw amino-acid sequence, 263 residues long: Chaperone protein ClpE (263 aa).

The signal sequence occupies residues methionine 1–alanine 34. The span at glutamine 238–asparagine 255 shows a compositional bias: polar residues. Residues glutamine 238–lysine 263 are disordered.

The protein belongs to the periplasmic pilus chaperone family.

It is found in the periplasm. Functionally, involved in the biogenesis of the CS31A capsule-like antigen. The polypeptide is Chaperone protein ClpE (clpE) (Escherichia coli).